A 312-amino-acid chain; its full sequence is Cytoplasmic dynein intermediate light chain DYN3 (312 aa).

Belongs to the dynein light intermediate chain DYN3 family. In terms of assembly, the dynein complex consists of at least two heavy chains and a number of intermediate and light chains. Interacts with DYN1.

It is found in the cytoplasm. Its subcellular location is the cytoskeleton. Component of the cytoplasmic dynein which acts as a motor for the intracellular retrograde motility of vesicles and organelles along microtubules. May play an important role in the proper orientation of the mitotic spindle into the budding daughter cell yeast. Probably required for normal progression of the cell cycle. The polypeptide is Cytoplasmic dynein intermediate light chain DYN3 (DYN3) (Saccharomyces cerevisiae (strain ATCC 204508 / S288c) (Baker's yeast)).